The primary structure comprises 412 residues: MASCAEPSEPSAPLPAGVPPLEDFEVLDGVEDAEGEEEEEEEEEEEDDLSELPPLEDMGQPPAEEAEQPGALAREFLAAMEPEPAPAPAPEEWLDILGNGLLRKKTLVPGPPGSSRPVKGQVVTVHLQTSLENGTRVQEEPELVFTLGDCDVIQALDLSVPLMDVGETAMVTADSKYCYGPQGRSPYIPPHAALCLEVTLKTAVDGPDLEMLTGQERVALANRKRECGNAHYQRADFVLAANSYDLAIKAITSSAKVDMTFEEEAQLLQLKVKCLNNLAASQLKLDHYRAALRSCSLVLEHQPDNIKALFRKGKVLAQQGEYSEAIPILRAALKLEPSNKTIHAELSKLVKKHAAQRSTETALYRKMLGNPSRLPAKCPGKGAWSIPWKWLFGATAVALGGVALSVVIAARN.

The disordered stretch occupies residues 1 to 68; the sequence is MASCAEPSEP…GQPPAEEAEQ (68 aa). The span at 22 to 50 shows a compositional bias: acidic residues; that stretch reads EDFEVLDGVEDAEGEEEEEEEEEEEDDLS. Positions 120–204 constitute a PPIase FKBP-type domain; it reads GQVVTVHLQT…CLEVTLKTAV (85 aa). Ca(2+) is bound by residues Asp149 and Asp151. Residues 221-254 form a TPR 1 repeat; sequence ANRKRECGNAHYQRADFVLAANSYDLAIKAITSS. Residues Lys249, Lys271, Lys273, and Lys284 each participate in a glycyl lysine isopeptide (Lys-Gly) (interchain with G-Cter in ubiquitin) cross-link. TPR repeat units lie at residues 272-305 and 306-339; these read VKCLNNLAASQLKLDHYRAALRSCSLVLEHQPDN and IKALFRKGKVLAQQGEYSEAIPILRAALKLEPSN. Ser296 carries the phosphoserine modification. Glycyl lysine isopeptide (Lys-Gly) (interchain with G-Cter in ubiquitin) cross-links involve residues Lys307, Lys314, Lys334, Lys340, Lys348, Lys351, and Lys352. A helical transmembrane segment spans residues 390–410; the sequence is WLFGATAVALGGVALSVVIAA.

As to quaternary structure, homomultimers or heteromultimers (Potential). Forms heterodimer with calmodulin. When activated by calmodulin and calcium, interacts with the BH4 domain of BCL2 and weakly with BCL2L1/BCLX isoform Bcl-X(L). Does not bind and inhibit calcineurin. Interacts with ZFYVE27; may negatively regulate ZFYVE27 phosphorylation. In terms of assembly, (Microbial infection) Interacts with hepatitis C/HCV protein NS5A. Requires Ca(2+) as cofactor. In terms of processing, ubiquitinated by PRKN during mitophagy, leading to its degradation and enhancement of mitophagy. Deubiquitinated by USP30. In terms of tissue distribution, widely expressed. Highest levels seen in the brain. Highly abundant in the retina.

It is found in the mitochondrion. The protein resides in the mitochondrion membrane. It catalyses the reaction [protein]-peptidylproline (omega=180) = [protein]-peptidylproline (omega=0). Its function is as follows. Constitutively inactive PPiase, which becomes active when bound to calmodulin and calcium. Seems to act as a chaperone for BCL2, targets it to the mitochondria and modulates its phosphorylation state. The BCL2/FKBP8/calmodulin/calcium complex probably interferes with the binding of BCL2 to its targets. The active form of FKBP8 may therefore play a role in the regulation of apoptosis. Involved in the inhibition of viral infection by influenza A viruses (IAV). The chain is Peptidyl-prolyl cis-trans isomerase FKBP8 (FKBP8) from Homo sapiens (Human).